Reading from the N-terminus, the 518-residue chain is Probable thiamine biosynthetic bifunctional enzyme (518 aa).

Residues 1–229 (MKRQIDYSLY…ATPPCFAQAR (229 aa)) form a thiamine-phosphate synthase region. 4-amino-2-methyl-5-(diphosphooxymethyl)pyrimidine is bound by residues 40 to 44 (QHREK) and N72. D73 and D92 together coordinate Mg(2+). 4-amino-2-methyl-5-(diphosphooxymethyl)pyrimidine is bound at residue S111. Residue 137–139 (TNT) coordinates 2-[(2R,5Z)-2-carboxy-4-methylthiazol-5(2H)-ylidene]ethyl phosphate. K140 provides a ligand contact to 4-amino-2-methyl-5-(diphosphooxymethyl)pyrimidine. 2-[(2R,5Z)-2-carboxy-4-methylthiazol-5(2H)-ylidene]ethyl phosphate-binding positions include G173 and 199-200 (VS). The tract at residues 230-518 (SSLTTPKDLL…IERAKLEKAE (289 aa)) is hydroxyethylthiazole kinase. M281 serves as a coordination point for 5-(2-hydroxyethyl)-4-methylthiazole. ATP is bound by residues K355 and S403. A430 serves as a coordination point for 5-(2-hydroxyethyl)-4-methylthiazole. C433 serves as the catalytic Proton acceptor; for hydroxyethylthiazole kinase activity.

This sequence in the N-terminal section; belongs to the thiamine-phosphate synthase family. The protein in the C-terminal section; belongs to the Thz kinase family. Mg(2+) is required as a cofactor.

It carries out the reaction 2-[(2R,5Z)-2-carboxy-4-methylthiazol-5(2H)-ylidene]ethyl phosphate + 4-amino-2-methyl-5-(diphosphooxymethyl)pyrimidine + 2 H(+) = thiamine phosphate + CO2 + diphosphate. The catalysed reaction is 2-(2-carboxy-4-methylthiazol-5-yl)ethyl phosphate + 4-amino-2-methyl-5-(diphosphooxymethyl)pyrimidine + 2 H(+) = thiamine phosphate + CO2 + diphosphate. The enzyme catalyses 4-methyl-5-(2-phosphooxyethyl)-thiazole + 4-amino-2-methyl-5-(diphosphooxymethyl)pyrimidine + H(+) = thiamine phosphate + diphosphate. It catalyses the reaction 5-(2-hydroxyethyl)-4-methylthiazole + ATP = 4-methyl-5-(2-phosphooxyethyl)-thiazole + ADP + H(+). It participates in cofactor biosynthesis; thiamine diphosphate biosynthesis; 4-methyl-5-(2-phosphoethyl)-thiazole from 5-(2-hydroxyethyl)-4-methylthiazole: step 1/1. It functions in the pathway cofactor biosynthesis; thiamine diphosphate biosynthesis; thiamine phosphate from 4-amino-2-methyl-5-diphosphomethylpyrimidine and 4-methyl-5-(2-phosphoethyl)-thiazole: step 1/1. Functionally, condenses 4-methyl-5-(beta-hydroxyethyl)thiazole monophosphate (THZ-P) and 2-methyl-4-amino-5-hydroxymethyl pyrimidine pyrophosphate (HMP-PP) to form thiamine monophosphate (TMP). This Schizosaccharomyces pombe (strain 972 / ATCC 24843) (Fission yeast) protein is Probable thiamine biosynthetic bifunctional enzyme (thi4).